The primary structure comprises 646 residues: Threonine--tRNA ligase (646 aa).

Residues 1 to 61 (MIKITFPDGS…NEDASVVLYK (61 aa)) enclose the TGS domain. The catalytic stretch occupies residues 242 to 541 (DHRKIGKEMQ…LIEHTAGKFP (300 aa)). Positions 337, 388, and 518 each coordinate Zn(2+).

Belongs to the class-II aminoacyl-tRNA synthetase family. As to quaternary structure, homodimer. Zn(2+) is required as a cofactor.

The protein localises to the cytoplasm. It catalyses the reaction tRNA(Thr) + L-threonine + ATP = L-threonyl-tRNA(Thr) + AMP + diphosphate + H(+). Catalyzes the attachment of threonine to tRNA(Thr) in a two-step reaction: L-threonine is first activated by ATP to form Thr-AMP and then transferred to the acceptor end of tRNA(Thr). Also edits incorrectly charged L-seryl-tRNA(Thr). The chain is Threonine--tRNA ligase from Bacteroides fragilis (strain YCH46).